A 248-amino-acid chain; its full sequence is MSLIPSLSLLLMSMVAASYSETVTCEDAQKTCPAVIACSSPGINGFPGKDGRDGTKGEKGEPGQGLRGLQGPPGKLGPPGNPGPSGSPGPKGQKGDPGKSPDCDSSLAVSERKALQTEMARIKKWLTFSLGKQVGNKFFLTNGEMMTFEKVKALCVKFQASVATPRNAAENRAIQNLIKEEAFMGITDEKTEGQFVDLTGNRLTYTNWNEGEPNNAGSDEDCVLLLKNGLWNDVPCSSSHLAVCEFPI.

The first 20 residues, 1–20 (MSLIPSLSLLLMSMVAASYS), serve as a signal peptide directing secretion. The Collagen-like domain maps to 42-99 (GINGFPGKDGRDGTKGEKGEPGQGLRGLQGPPGKLGPPGNPGPSGSPGPKGQKGDPGK). A disordered region spans residues 43–107 (INGFPGKDGR…GKSPDCDSSL (65 aa)). 4-hydroxyproline is present on P47. Over residues 49–61 (KDGRDGTKGEKGE) the composition is skewed to basic and acidic residues. 4-hydroxyproline is present on residues P73, P79, P82, and P88. Over residues 75–87 (KLGPPGNPGPSGS) the composition is skewed to pro residues. Positions 93–102 (QKGDPGKSPD) are enriched in basic and acidic residues. A coiled-coil region spans residues 112–130 (RKALQTEMARIKKWLTFSL). In terms of domain architecture, C-type lectin spans 134-245 (VGNKFFLTNG…CSSSHLAVCE (112 aa)). Intrachain disulfides connect C155/C244 and C222/C236.

In terms of assembly, oligomeric complex of 3 or more homotrimers. Interacts with MASP1 and MASP2. Interacts with MEP1A and MEP1B and may inhibit their catalytic activity. In terms of processing, hydroxylation on proline residues within the sequence motif, GXPG, is most likely to be 4-hydroxy as this fits the requirement for 4-hydroxylation in vertebrates.

The protein resides in the secreted. Calcium-dependent lectin involved in innate immune defense. Binds mannose, fucose and N-acetylglucosamine on different microorganisms and activates the lectin complement pathway. Binds to late apoptotic cells, as well as to apoptotic blebs and to necrotic cells, but not to early apoptotic cells, facilitating their uptake by macrophages. The protein is Mannose-binding protein C (MBL2) of Hylobates lar (Lar gibbon).